An 835-amino-acid polypeptide reads, in one-letter code: Toll-like receptor 4 (835 aa).

The first 25 residues, 1-25 (MMPLLHLAGTLIMALFLSCLRPGSL), serve as a signal peptide directing secretion. Over 26-638 (NPCIEVLPNI…KTIISVSVVS (613 aa)) the chain is Extracellular. Cysteine 28 and cysteine 39 are joined by a disulfide. N-linked (GlcNAc...) asparagine glycans are attached at residues asparagine 34, asparagine 43, and asparagine 75. LRR repeat units follow at residues 54–75 (STKNLDLSFNPLKILRSYSFTN), 78–99 (QLQWLDLSRCEIETIEDKAWHG), 102–123 (QLSTLVLTGNPIKSFSPGSFSG), 126–147 (NLENLVAVETKMTSLEGFHIGQ), and 150–171 (SLKKLNVAHNLIHSFKLPEYFS). N-linked (GlcNAc...) asparagine glycosylation occurs at asparagine 172. 3 LRR repeats span residues 175-198 (NLEHVDLSYNYIQTISVKDLQFLR), 204-224 (NLSLDLSLNPIDSIQAQAFQG), and 226-247 (RLHELTLRSNFNSSNVLKMCLQ). Residues asparagine 204, asparagine 237, asparagine 248, asparagine 281, and asparagine 307 are each glycosylated (N-linked (GlcNAc...) asparagine). Cysteines 280 and 304 form a disulfide. Residues 372-381 (SLRYLDLSRN) form an LRR 9 repeat. Cysteine 388 and cysteine 389 are joined by a disulfide. LRR repeat units lie at residues 398-420 (NLKYLDLSFNGVILMSANFMGLE), 421-442 (ELEYLDFQHSTLKKVTEFSVFL), 446-467 (KLLYLDISYTNTKIDFDGIFLG), and 470-491 (SLNTLKMAGNSFKDNTLSNVFT). Asparagine 492, asparagine 495, and asparagine 524 each carry an N-linked (GlcNAc...) asparagine glycan. 3 LRR repeats span residues 495-516 (NLTFLDLSKCQLEQISRGVFDT), 519-540 (RLQLLNMSHNNLLFLDPSHYKQ), and 543-564 (SLRTLDCSFNRIETSKGILQHF). N-linked (GlcNAc...) asparagine glycans are attached at residues asparagine 572 and asparagine 575. Residues 576–627 (NSVACICEYQNFLQWVKDQKMFLVNVEQMKCASPIDMKASLVLDFTNSTCYI) form the LRRCT domain. 2 disulfides stabilise this stretch: cysteine 580/cysteine 606 and cysteine 582/cysteine 625. Asparagine 622 is a glycosylation site (N-linked (GlcNAc...) asparagine). Residues 639–659 (VLVVATVAFLIYHFYFHLILI) form a helical membrane-spanning segment. Residues 660–835 (AGCKKYSRGE…EEEQEATTLT (176 aa)) lie on the Cytoplasmic side of the membrane. In terms of domain architecture, TIR spans 670–813 (SIYDAFVIYS…IFWRRLKKAL (144 aa)).

Belongs to the Toll-like receptor family. As to quaternary structure, belongs to the lipopolysaccharide (LPS) receptor, a multi-protein complex containing at least CD14, LY96 and TLR4. Binding to bacterial LPS leads to homodimerization. Interacts with LY96 via the extracellular domain. Interacts with MYD88 and TIRAP via their respective TIR domains. Interacts with TICAM2. Interacts with NOX4. Interacts with CNPY3 and HSP90B1; this interaction is required for proper folding in the endoplasmic reticulum. Interacts with MAP3K21; this interaction leads to negative regulation of TLR4 signaling. Interacts with CD36, following CD36 stimulation by oxLDL or amyloid-beta 42, and forms a heterodimer with TLR6. The trimeric complex is internalized and triggers inflammatory response. LYN kinase activity facilitates TLR4-TLR6 heterodimerization and signal initiation. Interacts with TICAM1 in response to LPS in a WDFY1-dependent manner. Interacts with WDFY1 in response to LPS. Interacts with SMPDL3B. Interacts with CEACAM1; upon lipopolysaccharide stimulation, forms a complex including TLR4 and the phosphorylated form of SYK and CEACAM1, which in turn, recruits PTPN6 that dephosphorylates SYK, reducing the production of reactive oxygen species (ROS) and lysosome disruption, which in turn, reduces the activity of the inflammasome. Interacts with RFTN1; the interaction occurs in response to lipopolysaccharide stimulation. Interacts with SCIMP; the interaction occurs in response to lipopolysaccharide stimulation and is enhanced by phosphorylation of SCIMP by LYN. This interaction facilitates the phosphorylation of TLR4 by LYN which elicits a selective cytokine response in macrophages. Interacts with TRAF3IP3. Interacts with TREM1; this interaction enhances TLR4-mediated inflammatory response. Interacts with ZG16B/PAUF. Interacts with CD82; this interaction inhibits TLR4-mediated signaling pathway. Phosphorylated on tyrosine residues by LYN after binding lipopolysaccharide. In terms of processing, ubiquitinated by RNF128 via 'Lys-28'-linked polyubiquitin chains, leading to proteasomal degradation.

The protein resides in the cell membrane. Its subcellular location is the early endosome. It is found in the cell projection. It localises to the ruffle. In terms of biological role, transmembrane receptor that functions as a pattern recognition receptor recognizing pathogen- and damage-associated molecular patterns (PAMPs and DAMPs) to induce innate immune responses via downstream signaling pathways. At the plasma membrane, cooperates with LY96 to mediate the innate immune response to bacterial lipopolysaccharide (LPS). Also involved in LPS-independent inflammatory responses triggered by free fatty acids, such as palmitate, and Ni(2+). Mechanistically, acts via MYD88, TIRAP and TRAF6, leading to NF-kappa-B activation, cytokine secretion and the inflammatory response. Alternatively, CD14-mediated TLR4 internalization via endocytosis is associated with the initiation of a MYD88-independent signaling via the TICAM1-TBK1-IRF3 axis leading to type I interferon production. In addition to the secretion of proinflammatory cytokines, initiates the activation of NLRP3 inflammasome and formation of a positive feedback loop between autophagy and NF-kappa-B signaling cascade. In complex with TLR6, promotes inflammation in monocytes/macrophages by associating with TLR6 and the receptor CD86. Upon ligand binding, such as oxLDL or amyloid-beta 42, the TLR4:TLR6 complex is internalized and triggers inflammatory response, leading to NF-kappa-B-dependent production of CXCL1, CXCL2 and CCL9 cytokines, via MYD88 signaling pathway, and CCL5 cytokine, via TICAM1 signaling pathway. In myeloid dendritic cells, vesicular stomatitis virus glycoprotein G but not LPS promotes the activation of IRF7, leading to type I IFN production in a CD14-dependent manner. The polypeptide is Toll-like receptor 4 (Tlr4) (Rattus norvegicus (Rat)).